The primary structure comprises 63 residues: Cytochrome c oxidase subunit 5A, mitochondrial (63 aa).

Belongs to the cytochrome c oxidase subunit 5A family. In terms of assembly, component of the cytochrome c oxidase (complex IV, CIV), a multisubunit enzyme composed of a catalytic core of 3 subunits and several supernumerary subunits. The complex exists as a monomer or a dimer and forms supercomplexes (SCs) in the inner mitochondrial membrane with ubiquinol-cytochrome c oxidoreductase (cytochrome b-c1 complex, complex III, CIII).

The protein resides in the mitochondrion inner membrane. The protein operates within energy metabolism; oxidative phosphorylation. Its function is as follows. Component of the cytochrome c oxidase, the last enzyme in the mitochondrial electron transport chain which drives oxidative phosphorylation. The respiratory chain contains 3 multisubunit complexes succinate dehydrogenase (complex II, CII), ubiquinol-cytochrome c oxidoreductase (cytochrome b-c1 complex, complex III, CIII) and cytochrome c oxidase (complex IV, CIV), that cooperate to transfer electrons derived from NADH and succinate to molecular oxygen, creating an electrochemical gradient over the inner membrane that drives transmembrane transport and the ATP synthase. Cytochrome c oxidase is the component of the respiratory chain that catalyzes the reduction of oxygen to water. Electrons originating from reduced cytochrome c in the intermembrane space (IMS) are transferred via the dinuclear copper A center (CU(A)) of subunit 2 and heme A of subunit 1 to the active site in subunit 1, a binuclear center (BNC) formed by heme A3 and copper B (CU(B)). The BNC reduces molecular oxygen to 2 water molecules using 4 electrons from cytochrome c in the IMS and 4 protons from the mitochondrial matrix. The sequence is that of Cytochrome c oxidase subunit 5A, mitochondrial (COVA) from Manduca sexta (Tobacco hawkmoth).